Consider the following 725-residue polypeptide: Exocyst complex component 8 (725 aa).

Ser19 carries the post-translational modification Phosphoserine. Positions 137-159 (AGFFSTPGGASRDGSGPGEEGKQ) are disordered. At Thr142 the chain carries Phosphothreonine. Residues 182-282 (YLVYNGDLVE…WLEVLEDTKR (101 aa)) enclose the PH domain. Positions 285 to 328 (SEKRRREQEEAAAPRGPPQVTSKATNPFEDDEEEEPAVPEVEEE) are disordered. Positions 312–328 (FEDDEEEEPAVPEVEEE) are enriched in acidic residues.

The protein belongs to the EXO84 family. The exocyst complex is composed of EXOC1, EXOC2, EXOC3, EXOC4, EXOC5, EXOC6, EXOC7 and EXOC8. Interacts (via PH domain) with GTP-bound RALA and RALB. Interacts with SH3BP1; required for the localization of both SH3BP1 and the exocyst to the leading edge of migrating cells.

It is found in the cytoplasm. Its subcellular location is the perinuclear region. It localises to the cell projection. The protein resides in the growth cone. Component of the exocyst complex involved in the docking of exocytic vesicles with fusion sites on the plasma membrane. The polypeptide is Exocyst complex component 8 (EXOC8) (Homo sapiens (Human)).